The sequence spans 490 residues: Betaine aldehyde dehydrogenase (490 aa).

D93 is a binding site for K(+). 150 to 152 is a binding site for NAD(+); the sequence is GAW. Catalysis depends on K162, which acts as the Charge relay system. Position 176–179 (176–179) interacts with NAD(+); that stretch reads KPSE. V180 is a K(+) binding site. 230–233 lines the NAD(+) pocket; it reads GIAS. Residue L246 participates in K(+) binding. The active-site Proton acceptor is the E252. 3 residues coordinate NAD(+): G254, C286, and E387. C286 (nucleophile) is an active-site residue. Cysteine sulfenic acid (-SOH) is present on C286. K(+) is bound by residues K457 and G460. The active-site Charge relay system is the E464.

Belongs to the aldehyde dehydrogenase family. In terms of assembly, dimer of dimers. Requires K(+) as cofactor.

The enzyme catalyses betaine aldehyde + NAD(+) + H2O = glycine betaine + NADH + 2 H(+). The protein operates within amine and polyamine biosynthesis; betaine biosynthesis via choline pathway; betaine from betaine aldehyde: step 1/1. In terms of biological role, involved in the biosynthesis of the osmoprotectant glycine betaine. Catalyzes the irreversible oxidation of betaine aldehyde to the corresponding acid. This is Betaine aldehyde dehydrogenase from Yersinia pseudotuberculosis serotype IB (strain PB1/+).